The sequence spans 324 residues: Homocysteine S-methyltransferase 1 (324 aa).

A Hcy-binding domain is found at 6 to 320; that stretch reads IKELIVEHPG…KDIAEIASAV (315 aa). The Zn(2+) site is built by Cys-238, Cys-305, and Cys-306.

Zn(2+) serves as cofactor.

The protein resides in the cytoplasm. It carries out the reaction S-methyl-L-methionine + L-homocysteine = 2 L-methionine + H(+). Homocysteine S-methyltransferase involved in the conversion of S-adenosylmethionine (AdoMet) to methionine to control the methionine/AdoMet ratio. Also converts S-methylmethionine (SMM) to methionine. The sequence is that of Homocysteine S-methyltransferase 1 (MHT1) from Saccharomyces cerevisiae (strain ATCC 204508 / S288c) (Baker's yeast).